Reading from the N-terminus, the 222-residue chain is Glutathione S-transferase A4 (222 aa).

Position 1 is an N-acetylmethionine (methionine 1). The 81-residue stretch at 3–83 folds into the GST N-terminal domain; the sequence is ARPKLHYPNG…YIADKHNLFG (81 aa). Residues tyrosine 9, 54 to 55, and 67 to 68 each bind glutathione; these read QV and QT. The GST C-terminal domain maps to 85-208; sequence NLKERTLIDM…EPGSKKKPPP (124 aa). Tyrosine 212 is a substrate binding site.

The protein belongs to the GST superfamily. Alpha family. In terms of assembly, homodimer. Expressed at a high level in brain, placenta, and skeletal muscle and much lower in lung and liver.

It localises to the cytoplasm. It carries out the reaction RX + glutathione = an S-substituted glutathione + a halide anion + H(+). In terms of biological role, conjugation of reduced glutathione to a wide number of exogenous and endogenous hydrophobic electrophiles. This isozyme has a high catalytic efficiency with 4-hydroxyalkenals such as 4-hydroxynonenal (4-HNE). This chain is Glutathione S-transferase A4 (GSTA4), found in Homo sapiens (Human).